Consider the following 152-residue polypeptide: MVVRKKKKSRKLRGRTRSMGWGRIGQHRKSGARGGFGAVGFHKHKWIWVLKYAPNWYGKHGFTRPPETIYGVYSINVGELDELAKHLVSKNLAYREEGKIVIDVTSMGFNKVLGRGKVTLPLKIITKSISKRAREKITAVGGEVVVIGEKQQ.

Belongs to the universal ribosomal protein uL15 family. In terms of assembly, part of the 50S ribosomal subunit.

Binds to the 23S rRNA. This chain is Large ribosomal subunit protein uL15, found in Staphylothermus marinus (strain ATCC 43588 / DSM 3639 / JCM 9404 / F1).